The sequence spans 52 residues: Rubredoxin (52 aa).

Met1 is subject to N-formylmethionine; partial. In terms of domain architecture, Rubredoxin-like spans 1–52; sequence MKKYGCLVCGYVYDPAKGDPDHGIAPGTAFEDLPADWVCPLCGVSKDEFEPL. The Fe cation site is built by Cys6, Cys9, Cys39, and Cys42.

It belongs to the rubredoxin family. Fe(3+) is required as a cofactor. Observed in four forms, with and without iron, and with and without formylation at Met-1.

Its function is as follows. Rubredoxin is a small nonheme, iron protein lacking acid-labile sulfide. Its single Fe, chelated to 4 Cys, functions as an electron acceptor and may also stabilize the conformation of the molecule. This chain is Rubredoxin, found in Heliobacterium mobile (Heliobacillus mobilis).